The chain runs to 358 residues: Porphobilinogen deaminase, chloroplastic (358 aa).

The N-terminal stretch at 1–24 is a signal peptide; the sequence is MPPPPRCAATTAHHSLLGSPTCLA. Cys290 is modified (S-(dipyrrolylmethanemethyl)cysteine).

The protein belongs to the HMBS family. Requires dipyrromethane as cofactor.

It localises to the plastid. The protein resides in the chloroplast. The catalysed reaction is 4 porphobilinogen + H2O = hydroxymethylbilane + 4 NH4(+). The protein operates within porphyrin-containing compound metabolism; protoporphyrin-IX biosynthesis; coproporphyrinogen-III from 5-aminolevulinate: step 2/4. It participates in porphyrin-containing compound metabolism; chlorophyll biosynthesis. Functionally, tetrapolymerization of the monopyrrole PBG into the hydroxymethylbilane pre-uroporphyrinogen in several discrete steps. The sequence is that of Porphobilinogen deaminase, chloroplastic (HEMC) from Oryza sativa subsp. japonica (Rice).